The chain runs to 1463 residues: MLLSPSLLLLLLLGAPRGCAEGVAAALTPERLLEWQDKGIFVIQSESLKKCIQAGKSVLTLENCKQANKHMLWKWVSNHGLFNIGGSGCLGLNFSAPEQPLSLYECDSTLVSLRWRCNRKMITGPLQYSVQVAHDNTVVASRKYIHKWISYGSGGGDICEYLHKDLHTIKGNTHGMPCMFPFQYNHQWHHECTREGREDDLLWCATTSRYERDEKWGFCPDPTSAEVGCDTIWEKDLNSHICYQFNLLSSLSWSEAHSSCQMQGGTLLSITDETEENFIREHMSSKTVEVWMGLNQLDEHAGWQWSDGTPLNYLNWSPEVNFEPFVEDHCGTFSSFMPSAWRSRDCESTLPYICKKYLNHIDHEIVEKDAWKYYATHCEPGWNPYNRNCYKLQKEEKTWHEALRSCQADNSALIDITSLAEVEFLVTLLGDENASETWIGLSSNKIPVSFEWSNDSSVIFTNWHTLEPHIFPNRSQLCVSAEQSEGHWKVKNCEERLFYICKKAGHVLSDAESGCQEGWERHGGFCYKIDTVLRSFDQASSGYYCPPALVTITNRFEQAFITSLISSVVKMKDSYFWIALQDQNDTGEYTWKPVGQKPEPVQYTHWNTHQPRYSGGCVAMRGRHPLGRWEVKHCRHFKAMSLCKQPVENQEKAEYEERWPFHPCYLDWESEPGLASCFKVFHSEKVLMKRTWREAEAFCEEFGAHLASFAHIEEENFVNELLHSKFNWTEERQFWIGFNKRNPLNAGSWEWSDRTPVVSSFLDNTYFGEDARNCAVYKANKTLLPLHCGSKREWICKIPRDVKPKIPFWYQYDVPWLFYQDAEYLFHTFASEWLNFEFVCSWLHSDLLTIHSAHEQEFIHSKIKALSKYGASWWIGLQEERANDEFRWRDGTPVIYQNWDTGRERTVNNQSQRCGFISSITGLWGSEECSVSMPSICKRKKVWLIEKKKDTPKQHGTCPKGWLYFNYKCLLLNIPKDPSSWKNWTHAQHFCAEEGGTLVAIESEVEQAFITMNLFGQTTSVWIGLQNDDYETWLNGKPVVYSNWSPFDIINIPSHNTTEVQKHIPLCALLSSNPNFHFTGKWYFEDCGKEGYGFVCEKMQDTSGHGVNTSDMYPMPNTLEYGNRTYKIINANMTWYAAIKTCLMHKAQLVSITDQYHQSFLTVVLNRLGYAHWIGLFTTDNGLNFDWSDGTKSSFTFWKDEESSLLGDCVFADSNGRWHSTACESFLQGAICHVPPETRQSEHPELCSETSIPWIKFKSNCYSFSTVLDSMSFEAAHEFCKKEGSNLLTIKDEAENAFLLEELFAFGSSVQMVWLNAQFDGNNETIKWFDGTPTDQSNWGIRKPDTDYFKPHHCVALRIPEGLWQLSPCQEKKGFICKMEADIHTAEALPEKGPSHSIIPLAVVLTLIVIVAICTLSFCIYKHNGGFFRRLAGFRNPYYPATNFSTVYLEENILISDLEKSDQ.

The first 20 residues, M1 to A20, serve as a signal peptide directing secretion. Topologically, residues E21–S1397 are extracellular. The 124-residue stretch at K38–Y161 folds into the Ricin B-type lectin domain. 14 disulfides stabilise this stretch: C51/C64, C89/C106, C178/C204, C192/C219, C260/C354, C330/C346, C406/C501, C478/C493, C617/C634, C699/C796, C774/C788, C840/C937, C914/C929, and C1067/C1087. The N-linked (GlcNAc...) asparagine glycan is linked to N93. One can recognise a Fibronectin type-II domain in the interval T173 to D221. C-type lectin domains follow at residues N238–K355, Y385–K502, H522–C643, G673–K797, Y819–K938, F965–C1096, Y1121–C1232, and F1257–K1378. The N-linked (GlcNAc...) asparagine glycan is linked to N454. N1123 carries an N-linked (GlcNAc...) asparagine glycan. 3 cysteine pairs are disulfide-bonded: C1209–C1223, C1280–C1377, and C1354–C1369. Residues I1398–F1418 form a helical membrane-spanning segment. Residues C1419 to Q1463 lie on the Cytoplasmic side of the membrane. The Endocytosis signal motif lies at N1436–T1442.

In terms of assembly, interacts with sPLA2-IB/PLA2G1B; this interaction mediates intracellular signaling as well as clearance of extracellular sPLA2-IB/PLA2G1B via endocytotic pathway. Interacts with sPLA2-X/PLA2G10; this interaction mediates sPLA2-X/PLA2G10 clearance and inactivation. In terms of processing, the secretory phospholipase A2 receptor form may be produced by the action of metalloproteinases. It contains all extracellular domains and only lacks transmembrane and cytosolic regions. It is however unclear whether this form is produced by proteolytic cleavage as suggested by some experiments, or by alternative splicing, as in the case of isoform 2 that shares all characteristics of secretory phospholipase A2 receptor form. As to expression, expressed in podocytes (at protein level). Present in lung macrophage (at protein level). Highly expressed in kidney. Also expressed in pancreas, amnion, choriodecidua and placenta. Isoform 2 is expressed at much lower level.

Its subcellular location is the cell membrane. The protein resides in the secreted. Functionally, receptor for secretory phospholipase A2 (sPLA2). Acts as a receptor for phospholipase sPLA2-IB/PLA2G1B but not sPLA2-IIA/PLA2G2A. Also able to bind to snake PA2-like toxins. Although its precise function remains unclear, binding of sPLA2 to its receptor participates in both positive and negative regulation of sPLA2 functions as well as clearance of sPLA2. Binding of sPLA2-IB/PLA2G1B induces various effects depending on the cell type, such as activation of the mitogen-activated protein kinase (MAPK) cascade to induce cell proliferation, the production of lipid mediators, selective release of arachidonic acid in bone marrow-derived mast cells. In neutrophils, binding of sPLA2-IB/PLA2G1B can activate p38 MAPK to stimulate elastase release and cell adhesion. May be involved in responses in pro-inflammatory cytokine productions during endotoxic shock. Also has endocytic properties and rapidly internalizes sPLA2 ligands, which is particularly important for the clearance of extracellular sPLA2s to protect their potent enzymatic activities. The soluble secretory phospholipase A2 receptor form is circulating and acts as a negative regulator of sPLA2 functions by blocking the biological functions of sPLA2-IB/PLA2G1B. In podocytes, binding of sPLA2-IB/PLA2G1B can regulate podocyte survival and glomerular homeostasis. The polypeptide is Secretory phospholipase A2 receptor (PLA2R1) (Homo sapiens (Human)).